The sequence spans 55 residues: Metallothionein-3 (55 aa).

This sequence belongs to the metallothionein superfamily. Type 11 family.

The polypeptide is Metallothionein-3 (MTP3) (Yarrowia lipolytica (strain CLIB 122 / E 150) (Yeast)).